The chain runs to 120 residues: Cell cycle protein GpsB (120 aa).

Positions 34-74 form a coiled coil; the sequence is LDDVIKDYDTYNKELERLNDENERLRAKVDELNRQVEVGSS. Positions 69–90 are disordered; that stretch reads VEVGSSMSNQTASRQPVSSATN. Residues 71–90 show a composition bias toward polar residues; sequence VGSSMSNQTASRQPVSSATN.

This sequence belongs to the GpsB family. In terms of assembly, forms polymers through the coiled coil domains. Interacts with PBP1, MreC and EzrA.

The protein localises to the cytoplasm. Its function is as follows. Divisome component that associates with the complex late in its assembly, after the Z-ring is formed, and is dependent on DivIC and PBP2B for its recruitment to the divisome. Together with EzrA, is a key component of the system that regulates PBP1 localization during cell cycle progression. Its main role could be the removal of PBP1 from the cell pole after pole maturation is completed. Also contributes to the recruitment of PBP1 to the division complex. Not essential for septum formation. In Limosilactobacillus reuteri (strain DSM 20016) (Lactobacillus reuteri), this protein is Cell cycle protein GpsB.